A 912-amino-acid polypeptide reads, in one-letter code: Protein translocase subunit SecA (912 aa).

ATP contacts are provided by residues Gln-87, 105–109 (GEGKT), and Asp-509. Basic and acidic residues predominate over residues 847 to 859 (RERAVSQPVHEDA). Residues 847–912 (RERAVSQPVH…KYKHCHGKLN (66 aa)) form a disordered region. The span at 867-878 (AESEEASGESAD) shows a compositional bias: acidic residues. Basic and acidic residues predominate over residues 881–892 (QPVRRDGPKVGR). Zn(2+) is bound by residues Cys-896, Cys-898, Cys-907, and His-908. Over residues 902–912 (KKYKHCHGKLN) the composition is skewed to basic residues.

The protein belongs to the SecA family. As to quaternary structure, monomer and homodimer. Part of the essential Sec protein translocation apparatus which comprises SecA, SecYEG and auxiliary proteins SecDF-YajC and YidC. Requires Zn(2+) as cofactor.

Its subcellular location is the cell inner membrane. The protein localises to the cytoplasm. It carries out the reaction ATP + H2O + cellular proteinSide 1 = ADP + phosphate + cellular proteinSide 2.. Part of the Sec protein translocase complex. Interacts with the SecYEG preprotein conducting channel. Has a central role in coupling the hydrolysis of ATP to the transfer of proteins into and across the cell membrane, serving both as a receptor for the preprotein-SecB complex and as an ATP-driven molecular motor driving the stepwise translocation of polypeptide chains across the membrane. This chain is Protein translocase subunit SecA, found in Chromohalobacter salexigens (strain ATCC BAA-138 / DSM 3043 / CIP 106854 / NCIMB 13768 / 1H11).